We begin with the raw amino-acid sequence, 281 residues long: Ribosomal RNA small subunit methyltransferase J (281 aa).

S-adenosyl-L-methionine-binding positions include 129–130, 145–146, and D199; these read RD and ER.

It belongs to the methyltransferase superfamily. RsmJ family.

The protein resides in the cytoplasm. The enzyme catalyses guanosine(1516) in 16S rRNA + S-adenosyl-L-methionine = N(2)-methylguanosine(1516) in 16S rRNA + S-adenosyl-L-homocysteine + H(+). Functionally, specifically methylates the guanosine in position 1516 of 16S rRNA. In Laribacter hongkongensis (strain HLHK9), this protein is Ribosomal RNA small subunit methyltransferase J.